The primary structure comprises 711 residues: DNA ligase (711 aa).

Residues 39–43, 88–89, and Glu-119 each bind NAD(+); these read DAEYD and SL. The active-site N6-AMP-lysine intermediate is the Lys-121. NAD(+) is bound by residues Arg-142, Glu-179, Lys-295, and Lys-319. Zn(2+)-binding residues include Cys-416, Cys-419, Cys-434, and Cys-440. A BRCT domain is found at 630-711; it reads ESVSSLAGRA…LRELLAGAGA (82 aa).

The protein belongs to the NAD-dependent DNA ligase family. LigA subfamily. Mg(2+) serves as cofactor. Mn(2+) is required as a cofactor.

The enzyme catalyses NAD(+) + (deoxyribonucleotide)n-3'-hydroxyl + 5'-phospho-(deoxyribonucleotide)m = (deoxyribonucleotide)n+m + AMP + beta-nicotinamide D-nucleotide.. Functionally, DNA ligase that catalyzes the formation of phosphodiester linkages between 5'-phosphoryl and 3'-hydroxyl groups in double-stranded DNA using NAD as a coenzyme and as the energy source for the reaction. It is essential for DNA replication and repair of damaged DNA. The chain is DNA ligase from Halorhodospira halophila (strain DSM 244 / SL1) (Ectothiorhodospira halophila (strain DSM 244 / SL1)).